The chain runs to 512 residues: Protein male-specific lethal-3 (512 aa).

In terms of domain architecture, Chromo spans 11-90 (FHKGEIVLCY…QLQRELAEAA (80 aa)). Residues 98–175 (YSYKGTPDKP…DGRLKGNRGR (78 aa)) are disordered. Residues 149–169 (RTRDNSGGKRKEKPPSGDGRL) are compositionally biased toward basic and acidic residues. An MRG domain is found at 196-500 (QEDRIMMRVS…STALPQEDLQ (305 aa)).

As to quaternary structure, component of the male-specific lethal (MSL) histone acetyltransferase complex, composed of mof, mle, msl-1, msl-2 and msl-3 proteins, as well as roX1 and roX2 non-coding RNAs. Component of a maternal MSL subcomplex composed of mof, msl-1 and msl-3. Ubiquitinated by msl-2.

The protein resides in the nucleus. The protein localises to the chromosome. Its function is as follows. Component of the male-specific lethal (MSL) histone acetyltransferase complex, a multiprotein complex essential for elevating transcription of the single X chromosome in the male (X chromosome dosage compensation). The MSL complex specifically associates with the single X chromosome in males and mediates formation of H4K16ac, promoting a two-fold activation of X chromosome. Acts as a histone reader that specifically recognizes and binds histone H3 trimethylated at 'Lys-36' (H3K36me3) and histone H4 monomethylated at 'Lys-20' (H4K20me1). Within the MSL complex, mediates the spreading of the MSL complex from initiation sites on the male X chromosome to flanking chromatin. Following initial recruitment of the MSL complex to male X chromosome by msl-2, msl-3 binds H3K36me3 and promotes spreading of the MSL complex in cis. In addition to its role in dosage compensation in males, promotes germline stem cell differentiation in females: recognizes and binds H3K36me3, promoting recruitment of the ATAC complex and transcription of genes, such as RpS19b. The polypeptide is Protein male-specific lethal-3 (Drosophila melanogaster (Fruit fly)).